The primary structure comprises 410 residues: Lipoyl synthase, mitochondrial (410 aa).

[4Fe-4S] cluster contacts are provided by cysteine 125, cysteine 130, cysteine 136, cysteine 157, cysteine 161, cysteine 164, and serine 373. In terms of domain architecture, Radical SAM core spans 140-362 (SDEEGTATAT…EKEAMDMGFL (223 aa)).

Belongs to the radical SAM superfamily. Lipoyl synthase family. It depends on [4Fe-4S] cluster as a cofactor.

The protein resides in the mitochondrion. The catalysed reaction is [[Fe-S] cluster scaffold protein carrying a second [4Fe-4S](2+) cluster] + N(6)-octanoyl-L-lysyl-[protein] + 2 oxidized [2Fe-2S]-[ferredoxin] + 2 S-adenosyl-L-methionine + 4 H(+) = [[Fe-S] cluster scaffold protein] + N(6)-[(R)-dihydrolipoyl]-L-lysyl-[protein] + 4 Fe(3+) + 2 hydrogen sulfide + 2 5'-deoxyadenosine + 2 L-methionine + 2 reduced [2Fe-2S]-[ferredoxin]. It participates in protein modification; protein lipoylation via endogenous pathway; protein N(6)-(lipoyl)lysine from octanoyl-[acyl-carrier-protein]: step 2/2. Catalyzes the radical-mediated insertion of two sulfur atoms into the C-6 and C-8 positions of the octanoyl moiety bound to the lipoyl domains of lipoate-dependent enzymes, thereby converting the octanoylated domains into lipoylated derivatives. In Leishmania major, this protein is Lipoyl synthase, mitochondrial.